Reading from the N-terminus, the 492-residue chain is Probable Xaa-Pro aminopeptidase ACLA_020440 (492 aa).

Aspartate 272, aspartate 283, glutamate 421, and glutamate 460 together coordinate Mn(2+).

The protein belongs to the peptidase M24B family. Requires Mn(2+) as cofactor.

The catalysed reaction is Release of any N-terminal amino acid, including proline, that is linked to proline, even from a dipeptide or tripeptide.. Its function is as follows. Catalyzes the removal of a penultimate prolyl residue from the N-termini of peptides. This chain is Probable Xaa-Pro aminopeptidase ACLA_020440, found in Aspergillus clavatus (strain ATCC 1007 / CBS 513.65 / DSM 816 / NCTC 3887 / NRRL 1 / QM 1276 / 107).